We begin with the raw amino-acid sequence, 1060 residues long: Centrosomal protein of 131 kDa (1060 aa).

Residues 1-11 are compositionally biased toward polar residues; it reads MKGSRTITATP. A disordered region spans residues 1–96; the sequence is MKGSRTITAT…TGSPRPAEPT (96 aa). The interval 1–244 is interaction with PLK4; that stretch reads MKGSRTITAT…SQSARGTTGL (244 aa). Ser14 and Ser35 each carry phosphoserine. Polar residues-rich tracts occupy residues 32–50 and 73–88; these read RPGS…SVAT and LRRS…SWTG. Ser47 bears the Phosphoserine; by MAPKAPK2 mark. Ser78 carries the post-translational modification Phosphoserine; by MAPKAPK2 and PLK4. Residues Ser89, Ser105, Ser114, Ser146, and Ser150 each carry the phosphoserine modification. Disordered regions lie at residues 136–155 and 217–248; these read LALP…LGPR and EGGE…LRRR. Residues 217-226 show a composition bias toward basic and acidic residues; it reads EGGEGSDLGK. The IQ domain occupies 263–283; it reads NQAAVTIQRWYRCQVQRRRAG. Composition is skewed to basic and acidic residues over residues 314–327 and 344–363; these read EEAA…EKAR and KASE…RAPE. The segment at 314–437 is disordered; it reads EEAARKKARE…VSGSSRGKAR (124 aa). Residues 398 to 408 show a composition bias toward low complexity; sequence ASESSPEQWQS. Positions 409-424 are enriched in basic and acidic residues; the sequence is PEDKPQDIHSQGEARQ. Residue Thr473 is modified to Phosphothreonine. At Ser481 the chain carries Phosphoserine.

The protein belongs to the CEP131 family. In terms of assembly, self-associates. Associates with the centriolar satellite BBSome protein complex Interacts with BBS4; the interaction limits BBS4 availability for association with the BBSome complex, and hence negatively regulates ciliary localization of the BBSome complex. Interacts with MIB1. Interacts with PCM1; the interaction increases in response to ultraviolet light (UV) radiation. Associates with microtubule; association to microtubule is reduced in response to cellular stress, such as UV stimulation, in a process that requires p38 MAP kinase signaling. Interacts with CEP290, DCTN1, MAP1LC3B, PCNT, PCM1 and CEP152. Interacts with 14-3-3 proteins following UV-induced phosphorylation by MAPKAPK2; this inhibits formation of novel centriolar satellites. Interacts with SDCCAG8. Interacts with CCDC61. Interacts with PLK4. Post-translationally, ubiquitinated. Undergoes monoubiquitination catalyzed by the E3 ubiquitin-protein ligase MIB1 in proliferating cells, preventing cilia formation. Monoubiquitination by MIB1 is inhibited in response to cellular stress, such as ultraviolet light (UV) radiation or heat shock, resulting in ciliogenesis restoration. In terms of processing, MAPKAPK2-dependent phosphorylation at Ser-47 and Ser-78 occurs in response to cellular stress such as exposure to ultraviolet irradiation and promotes binding to 14-3-3 proteins which leads to cytoplasmic sequestration of CEP131 and blocks formation of new centriolar satellites. Phosphorylation at Ser-78 mediated by PLK4 is essential for proper organization and integrity of centriolar satellites but is dispensable for its localization to centrioles and its function in ciliogenesis. Localized to the pre-acrosome region of round and elongated spermatids in testis but also present in ovary, brain and adipose tissue.

The protein resides in the cytoplasm. It is found in the cytoskeleton. The protein localises to the microtubule organizing center. It localises to the centrosome. Its subcellular location is the centriolar satellite. The protein resides in the centriole. It is found in the cilium basal body. The protein localises to the cytoplasmic vesicle. It localises to the secretory vesicle. Its subcellular location is the acrosome. Functionally, component of centriolar satellites contributing to the building of a complex and dynamic network required to regulate cilia/flagellum formation. In proliferating cells, MIB1-mediated ubiquitination induces its sequestration within centriolar satellites, precluding untimely cilia formation initiation. In contrast, during normal and ultraviolet or heat shock cellular stress-induced ciliogenesis, its non-ubiquitinated form is rapidly displaced from centriolar satellites and recruited to centrosome/basal bodies in a microtubule- and p38 MAPK-dependent manner. Also acts as a negative regulator of BBSome ciliary trafficking. Plays a role in sperm flagellar formation; may be involved in the regulation of intraflagellar transport (IFT) and/or intramanchette (IMT) trafficking, which are important for axoneme extension and/or cargo delivery to the nascent sperm tail. Required for optimal cell proliferation and cell cycle progression; may play a role in the regulation of genome stability and centriole duplication in non-ciliogenic cells. Involved in centriole duplication. Required for CEP152, WDR62 and CEP63 centrosomal localization and promotes the centrosomal localization of CDK2. Essential for maintaining proper centriolar satellite integrity. The chain is Centrosomal protein of 131 kDa (Cep131) from Mus musculus (Mouse).